Reading from the N-terminus, the 266-residue chain is ATP synthase subunit a (266 aa).

The next 6 membrane-spanning stretches (helical) occupy residues 38–58 (KQML…LLAA), 99–119 (LLFS…IPLI), 126–146 (HVGG…AIGV), 162–182 (GVPV…NFLV), 191–211 (LFAT…GIEY), and 224–244 (SVLV…IMAL).

This sequence belongs to the ATPase A chain family. F-type ATPases have 2 components, CF(1) - the catalytic core - and CF(0) - the membrane proton channel. CF(1) has five subunits: alpha(3), beta(3), gamma(1), delta(1), epsilon(1). CF(0) has three main subunits: a(1), b(2) and c(9-12). The alpha and beta chains form an alternating ring which encloses part of the gamma chain. CF(1) is attached to CF(0) by a central stalk formed by the gamma and epsilon chains, while a peripheral stalk is formed by the delta and b chains.

It is found in the cell membrane. In terms of biological role, key component of the proton channel; it plays a direct role in the translocation of protons across the membrane. This is ATP synthase subunit a from Arthrobacter sp. (strain FB24).